A 583-amino-acid chain; its full sequence is Kelch-like protein 38 (583 aa).

Residues 34-101 (TDVILCTEDK…IYTGSITITM (68 aa)) form the BTB domain. Residues 136–237 (CLSMIRLSEI…HPTYLFQFIA (102 aa)) form the BACK domain. Kelch repeat units lie at residues 285–332 (TLVV…CIHS), 333–385 (ILYV…SYLH), 386–433 (FIFA…ANDQ), 435–481 (IYVF…VIED), 482–523 (KIYI…VINN), and 525–575 (LYVT…PLIC).

The protein is Kelch-like protein 38 (klhl38) of Danio rerio (Zebrafish).